A 61-amino-acid chain; its full sequence is Photosystem II reaction center protein Z (61 aa).

2 helical membrane passes run 5-25 (LTAL…VALA) and 38-58 (TKGF…DGVA).

Belongs to the PsbZ family. As to quaternary structure, PSII is composed of 1 copy each of membrane proteins PsbA, PsbB, PsbC, PsbD, PsbE, PsbF, PsbH, PsbI, PsbJ, PsbK, PsbL, PsbM, PsbT, PsbX, PsbY, PsbZ, Psb30/Ycf12, at least 3 peripheral proteins of the oxygen-evolving complex and a large number of cofactors. It forms dimeric complexes.

The protein localises to the plastid. Its subcellular location is the chloroplast thylakoid membrane. Its function is as follows. May control the interaction of photosystem II (PSII) cores with the light-harvesting antenna, regulates electron flow through the 2 photosystem reaction centers. PSII is a light-driven water plastoquinone oxidoreductase, using light energy to abstract electrons from H(2)O, generating a proton gradient subsequently used for ATP formation. This Phaeodactylum tricornutum (strain CCAP 1055/1) protein is Photosystem II reaction center protein Z.